The primary structure comprises 591 residues: NADP-dependent malic enzyme (591 aa).

A compositionally biased stretch (basic and acidic residues) spans 1-10 (MESTLKEMRD). Residues 1 to 26 (MESTLKEMRDGASVLDMDPKSTVGGG) are disordered. The active-site Proton donor is tyrosine 139. Residue arginine 192 coordinates NAD(+). The active-site Proton acceptor is the lysine 210. 3 residues coordinate a divalent metal cation: glutamate 282, aspartate 283, and aspartate 306. An NAD(+)-binding site is contributed by aspartate 306. 335-351 (LFLGAGEAGTGIAELIA) is an NADP(+) binding site. Asparagine 447 provides a ligand contact to NAD(+).

This sequence belongs to the malic enzymes family. Homotetramer. Mg(2+) is required as a cofactor. Mn(2+) serves as cofactor. As to expression, mRNA found twofold higher in leaves and stems than in roots.

It localises to the cytoplasm. The enzyme catalyses (S)-malate + NADP(+) = pyruvate + CO2 + NADPH. It catalyses the reaction oxaloacetate + H(+) = pyruvate + CO2. This is NADP-dependent malic enzyme from Populus trichocarpa (Western balsam poplar).